A 191-amino-acid chain; its full sequence is MATLRFTLLLLVFVVGIFFSFSSVSHVRATSEINLRIEPFSSPFATDLAKLQTQIGYKFNNINLLRRAMTHASFSQENNKALSIFGTHIIETAVSLQFLAKDIDISSKALGRLISEVSNVESSCALDGDRLGLGKIIRVSTKTDASNSAILCTGFRAIFGAIAIDAGTVDEAIKVFWKVHGARAGRLVSML.

Positions M1–A29 are cleaved as a signal peptide. Residues L48–G167 enclose the RNase III domain.

Required for karyogamy during female gametophyte development, when the two polar nuclei fuse to form the diploid central cell nucleus. This Arabidopsis thaliana (Mouse-ear cress) protein is Protein NUCLEAR FUSION DEFECTIVE 2.